A 225-amino-acid chain; its full sequence is Cytidylate kinase (225 aa).

Gly-12–Thr-20 is an ATP binding site.

The protein belongs to the cytidylate kinase family. Type 1 subfamily.

It is found in the cytoplasm. The enzyme catalyses CMP + ATP = CDP + ADP. It catalyses the reaction dCMP + ATP = dCDP + ADP. The protein is Cytidylate kinase of Edwardsiella ictaluri (strain 93-146).